A 507-amino-acid polypeptide reads, in one-letter code: Glycerol kinase (507 aa).

Thr14 is a binding site for ADP. ATP is bound by residues Thr14, Thr15, and Ser16. Thr14 contributes to the sn-glycerol 3-phosphate binding site. Arg18 lines the ADP pocket. Sn-glycerol 3-phosphate-binding residues include Arg84, Glu85, Tyr137, and Asp247. Glycerol contacts are provided by Arg84, Glu85, Tyr137, Asp247, and Gln248. Positions 269 and 312 each coordinate ADP. Residues Thr269, Gly312, Gln316, and Gly413 each coordinate ATP. Positions 413 and 417 each coordinate ADP.

It belongs to the FGGY kinase family.

The enzyme catalyses glycerol + ATP = sn-glycerol 3-phosphate + ADP + H(+). It functions in the pathway polyol metabolism; glycerol degradation via glycerol kinase pathway; sn-glycerol 3-phosphate from glycerol: step 1/1. With respect to regulation, inhibited by fructose 1,6-bisphosphate (FBP). Its function is as follows. Key enzyme in the regulation of glycerol uptake and metabolism. Catalyzes the phosphorylation of glycerol to yield sn-glycerol 3-phosphate. This is Glycerol kinase from Psychromonas ingrahamii (strain DSM 17664 / CCUG 51855 / 37).